Reading from the N-terminus, the 196-residue chain is ATP-dependent Clp protease proteolytic subunit (196 aa).

Residue serine 96 is the Nucleophile of the active site. Histidine 121 is an active-site residue.

It belongs to the peptidase S14 family. As to quaternary structure, fourteen ClpP subunits assemble into 2 heptameric rings which stack back to back to give a disk-like structure with a central cavity, resembling the structure of eukaryotic proteasomes.

Its subcellular location is the cytoplasm. The enzyme catalyses Hydrolysis of proteins to small peptides in the presence of ATP and magnesium. alpha-casein is the usual test substrate. In the absence of ATP, only oligopeptides shorter than five residues are hydrolyzed (such as succinyl-Leu-Tyr-|-NHMec, and Leu-Tyr-Leu-|-Tyr-Trp, in which cleavage of the -Tyr-|-Leu- and -Tyr-|-Trp bonds also occurs).. Its function is as follows. Cleaves peptides in various proteins in a process that requires ATP hydrolysis. Has a chymotrypsin-like activity. Plays a major role in the degradation of misfolded proteins. In Streptococcus pyogenes serotype M3 (strain SSI-1), this protein is ATP-dependent Clp protease proteolytic subunit.